An 89-amino-acid chain; its full sequence is MRPNIHPEYRQVLFHDLTANTYFLVGSTLKTDRTKQWEDGNTYPYVTLDVSSASHPFYTGKQKQIGKEGQVARFGQRFGQFFNKGKDKS.

This sequence belongs to the bacterial ribosomal protein bL31 family. Type B subfamily. In terms of assembly, part of the 50S ribosomal subunit.

This Aeromonas salmonicida (strain A449) protein is Large ribosomal subunit protein bL31B.